The chain runs to 404 residues: Formate-dependent phosphoribosylglycinamide formyltransferase (404 aa).

Residues 25-26 (EL) and glutamate 85 contribute to the N(1)-(5-phospho-beta-D-ribosyl)glycinamide site. ATP is bound by residues arginine 118, lysine 159, 164–169 (SSGKGQ), 199–202 (EGFI), and glutamate 207. Residues 123-318 (RLAAEELGLP…EFELHARAIL (196 aa)) enclose the ATP-grasp domain. Mg(2+) contacts are provided by glutamate 277 and glutamate 289. N(1)-(5-phospho-beta-D-ribosyl)glycinamide contacts are provided by residues aspartate 296, lysine 365, and 372–373 (RR). Residues 384 to 404 (TDEARSRAKQAAAAVRPVSAK) are disordered. Over residues 392–404 (KQAAAAVRPVSAK) the composition is skewed to low complexity.

It belongs to the PurK/PurT family. As to quaternary structure, homodimer.

It carries out the reaction N(1)-(5-phospho-beta-D-ribosyl)glycinamide + formate + ATP = N(2)-formyl-N(1)-(5-phospho-beta-D-ribosyl)glycinamide + ADP + phosphate + H(+). It participates in purine metabolism; IMP biosynthesis via de novo pathway; N(2)-formyl-N(1)-(5-phospho-D-ribosyl)glycinamide from N(1)-(5-phospho-D-ribosyl)glycinamide (formate route): step 1/1. Involved in the de novo purine biosynthesis. Catalyzes the transfer of formate to 5-phospho-ribosyl-glycinamide (GAR), producing 5-phospho-ribosyl-N-formylglycinamide (FGAR). Formate is provided by PurU via hydrolysis of 10-formyl-tetrahydrofolate. The chain is Formate-dependent phosphoribosylglycinamide formyltransferase from Paraburkholderia xenovorans (strain LB400).